Here is a 399-residue protein sequence, read N- to C-terminus: Tryptophan synthase beta chain (399 aa).

Position 92 is an N6-(pyridoxal phosphate)lysine (Lys92).

Belongs to the TrpB family. As to quaternary structure, tetramer of two alpha and two beta chains. The cofactor is pyridoxal 5'-phosphate.

It carries out the reaction (1S,2R)-1-C-(indol-3-yl)glycerol 3-phosphate + L-serine = D-glyceraldehyde 3-phosphate + L-tryptophan + H2O. It participates in amino-acid biosynthesis; L-tryptophan biosynthesis; L-tryptophan from chorismate: step 5/5. In terms of biological role, the beta subunit is responsible for the synthesis of L-tryptophan from indole and L-serine. This chain is Tryptophan synthase beta chain, found in Legionella pneumophila (strain Paris).